A 427-amino-acid chain; its full sequence is Lactadherin (427 aa).

An N-terminal signal peptide occupies residues M1 to A18. EGF-like domains lie at S20–N59 and E62–E106. 3 disulfide bridges follow: C24-C35, C29-C47, and C49-C58. S27 carries O-linked (Fuc...) serine; in PAS-6 glycosylation. An O-linked (Fuc...) threonine; in PAS-7 glycan is attached at T34. The N-linked (GlcNAc...) (hybrid) asparagine; in PAS-6 and PAS-7 glycan is linked to N59. 6 disulfides stabilise this stretch: C66–C77, C71–C94, C96–C105, C109–C265, C252–C256, and C270–C427. A Cell attachment site motif is present at residues R85–D87. 2 consecutive F5/8 type C domains span residues C109 to C265 and C270 to C427. An N-linked (GlcNAc...) (high mannose) asparagine; in PAS-6 glycan is attached at N227.

The two O-linked glycans consist of Gal, GlcNAc and Fuc, with probably Fuc as reducing terminal sugar. In terms of tissue distribution, milk and spermatozoan. Also present in epididymis, kidney, heart, lymphatic gland and spleen but not esophagus, small intestine, muscle and liver.

The protein localises to the membrane. The protein resides in the secreted. It localises to the cytoplasmic vesicle. It is found in the secretory vesicle. Its subcellular location is the acrosome membrane. In terms of biological role, contributes to phagocytic removal of apoptotic cells in many tissues. Plays an important role in the maintenance of intestinal epithelial homeostasis and the promotion of mucosal healing. Promotes VEGF-dependent neovascularization. Specific ligand for the alpha-v/beta-3 and alpha-v/beta-5 receptors. Also binds to phosphatidylserine-enriched cell surfaces in a receptor-independent manner. Zona pellucida-binding protein which may play a role in gamete interaction. This is Lactadherin (MFGE8) from Bos taurus (Bovine).